A 2233-amino-acid polypeptide reads, in one-letter code: Acetyl-CoA carboxylase (2233 aa).

Residue S2 is modified to N-acetylserine. S2 is subject to Phosphoserine. The 510-residue stretch at V58–T567 folds into the Biotin carboxylation domain. The ATP-grasp domain maps to K216–M408. Residue G256–G261 coordinates ATP. E365, E379, and N381 together coordinate Mn(2+). Residue R383 is part of the active site. Residues L694–T768 enclose the Biotinyl-binding domain. An N6-biotinyllysine modification is found at K735. A phosphoserine mark is found at S790, S1148, S1157, and S1162. Residues P1486–E1822 form the CoA carboxyltransferase N-terminal domain. The interval P1486–H2141 is carboxyltransferase. Residue A1627–I1629 coordinates acetyl-CoA. R1731 is a binding site for CoA. One can recognise a CoA carboxyltransferase C-terminal domain in the interval T1826 to H2141. G1998 contacts acetyl-CoA. Residues K2034 and R2036 each coordinate CoA.

Homodimer. Biotin serves as cofactor. Requires Mn(2+) as cofactor.

The protein localises to the cytoplasm. Its subcellular location is the endoplasmic reticulum membrane. It carries out the reaction hydrogencarbonate + acetyl-CoA + ATP = malonyl-CoA + ADP + phosphate + H(+). The enzyme catalyses N(6)-biotinyl-L-lysyl-[protein] + hydrogencarbonate + ATP = N(6)-carboxybiotinyl-L-lysyl-[protein] + ADP + phosphate + H(+). It functions in the pathway lipid metabolism; malonyl-CoA biosynthesis; malonyl-CoA from acetyl-CoA: step 1/1. Its activity is regulated as follows. By phosphorylation. The catalytic activity is inhibited by soraphen A, a polyketide isolated from the myxobacterium Sorangium cellulosum and a potent inhibitor of fungal growth. Carries out three functions: biotin carboxyl carrier protein, biotin carboxylase and carboxyltransferase. Involved in the synthesis of very-long-chain fatty acid synthesis which is required to maintain a functional nuclear envelope. Required for acylation and vacuolar membrane association of VAC8 which is necessary to maintain a normal morphology of the vacuole. This chain is Acetyl-CoA carboxylase (ACC1), found in Saccharomyces cerevisiae (strain ATCC 204508 / S288c) (Baker's yeast).